Here is a 292-residue protein sequence, read N- to C-terminus: ATP synthase gamma chain (292 aa).

The protein belongs to the ATPase gamma chain family. As to quaternary structure, F-type ATPases have 2 components, CF(1) - the catalytic core - and CF(0) - the membrane proton channel. CF(1) has five subunits: alpha(3), beta(3), gamma(1), delta(1), epsilon(1). CF(0) has three main subunits: a, b and c.

It localises to the cell membrane. Its function is as follows. Produces ATP from ADP in the presence of a proton gradient across the membrane. The gamma chain is believed to be important in regulating ATPase activity and the flow of protons through the CF(0) complex. This chain is ATP synthase gamma chain, found in Streptococcus suis (strain 05ZYH33).